We begin with the raw amino-acid sequence, 312 residues long: MRVILAPMEGVLDSLVRELLSEVNDYDLCITEFLRVVDQLLPAKSFYRLCPELHNQSRTQSGTLVRIQLLGQYPEWLAENAARAVALGSYGVDLNCGCPSKLVNGSGGGATLLKDPELIYQGAKAMRAAVPAHLPVTVKIRLGWDSGDRQFEIADAVQQAGATELAVHGRTKEDGYQAERINWQAIGEIRQRLTIPVIANGEIWDYQSAQECMKVTGCDAVMLGRGALNVPNLSRVVKYNEPRMPWLEVVKLLQKYVQLEKQGDTGLYHVARIKQWLGYLRKEYTEATDLFGEIRALKNSKDIALAIQRINR.

FMN contacts are provided by residues 7–9 (PME) and glutamine 68. The active-site Proton donor is cysteine 98. FMN-binding positions include lysine 139, 200–202 (NGE), and 224–225 (GR).

The protein belongs to the Dus family. DusC subfamily. FMN is required as a cofactor.

It catalyses the reaction 5,6-dihydrouridine(16) in tRNA + NADP(+) = uridine(16) in tRNA + NADPH + H(+). The catalysed reaction is 5,6-dihydrouridine(16) in tRNA + NAD(+) = uridine(16) in tRNA + NADH + H(+). Its function is as follows. Catalyzes the synthesis of 5,6-dihydrouridine (D), a modified base found in the D-loop of most tRNAs, via the reduction of the C5-C6 double bond in target uridines. Specifically modifies U16 in tRNAs. In Yersinia pestis, this protein is tRNA-dihydrouridine(16) synthase.